Reading from the N-terminus, the 73-residue chain is Translation initiation factor IF-1 (73 aa).

Residues 1-72 (MAKEEAIEKD…SKGRIVYRYK (72 aa)) enclose the S1-like domain.

Belongs to the IF-1 family. In terms of assembly, component of the 30S ribosomal translation pre-initiation complex which assembles on the 30S ribosome in the order IF-2 and IF-3, IF-1 and N-formylmethionyl-tRNA(fMet); mRNA recruitment can occur at any time during PIC assembly.

Its subcellular location is the cytoplasm. Functionally, one of the essential components for the initiation of protein synthesis. Stabilizes the binding of IF-2 and IF-3 on the 30S subunit to which N-formylmethionyl-tRNA(fMet) subsequently binds. Helps modulate mRNA selection, yielding the 30S pre-initiation complex (PIC). Upon addition of the 50S ribosomal subunit IF-1, IF-2 and IF-3 are released leaving the mature 70S translation initiation complex. The sequence is that of Translation initiation factor IF-1 from Salinibacter ruber (strain DSM 13855 / M31).